Consider the following 355-residue polypeptide: Uroporphyrinogen decarboxylase (355 aa).

Residues 27–31 (RQAGR), aspartate 77, tyrosine 154, threonine 209, and histidine 328 each bind substrate.

This sequence belongs to the uroporphyrinogen decarboxylase family. As to quaternary structure, homodimer.

The protein localises to the cytoplasm. The enzyme catalyses uroporphyrinogen III + 4 H(+) = coproporphyrinogen III + 4 CO2. The protein operates within porphyrin-containing compound metabolism; protoporphyrin-IX biosynthesis; coproporphyrinogen-III from 5-aminolevulinate: step 4/4. In terms of biological role, catalyzes the decarboxylation of four acetate groups of uroporphyrinogen-III to yield coproporphyrinogen-III. The polypeptide is Uroporphyrinogen decarboxylase (Dechloromonas aromatica (strain RCB)).